The primary structure comprises 506 residues: Hippocampus abundant transcript-like protein 1 (506 aa).

The segment at 1–25 (MSVEPPPELEEKAASEPEAGAMPEK) is disordered. Residues 1-49 (MSVEPPPELEEKAASEPEAGAMPEKRAGAQAAGSTWLQGFGRPSVYHAA) lie on the Extracellular side of the membrane. Residues 50–70 (IVIFLEFFAWGLLTTPMLTVL) form a helical membrane-spanning segment. The Cytoplasmic segment spans residues 71 to 82 (HETFSQHTFLMN). Residues 83-103 (GLIQGVKGLLSFLSAPLIGAL) traverse the membrane as a helical segment. Over 104 to 111 (SDVWGRKP) the chain is Extracellular. A helical transmembrane segment spans residues 112-132 (FLLGTVFFTCFPIPLMRISPW). Over 133–134 (WY) the chain is Cytoplasmic. A helical membrane pass occupies residues 135-155 (FAMISVSGVFSVTFSVIFAYV). Topologically, residues 156 to 168 (ADVTQEHERSTAY) are extracellular. The helical transmembrane segment at 169–189 (GWVSATFAASLVSSPAIGAYL) threads the bilayer. Residues 190–196 (SASYGDS) lie on the Cytoplasmic side of the membrane. A helical membrane pass occupies residues 197 to 217 (LVVLVATVVALLDICFILVAV). At 218–255 (PESLPEKMRPVSWGAQISWKQADPFASLKKVGKDSTVL) the chain is on the extracellular side. The chain crosses the membrane as a helical span at residues 256–276 (LICITVFLSYLPEAGQYSSFF). The Cytoplasmic segment spans residues 277–281 (LYLRQ). Residues 282 to 302 (VIGFGSVKIAAFIAMVGILSI) form a helical membrane-spanning segment. Topologically, residues 303–319 (VAQTAFLSILMRSLGNK) are extracellular. A helical membrane pass occupies residues 320–340 (NTVLLGLGFQMLQLAWYGFGS). Gln341 is a topological domain (cytoplasmic). The chain crosses the membrane as a helical span at residues 342 to 362 (AWMMWAAGTVAAMSSITFPAI). Topologically, residues 363–387 (SALVSRNAESDQQGVAQGIITGIRG) are extracellular. A helical membrane pass occupies residues 388-408 (LCNGLGPALYGFIFYMFHVEL). Residues 409 to 428 (TELGPKLNSNNVPLQGAVIP) are Cytoplasmic-facing. Residues 429 to 449 (GPPFLFGACIVLMSFLVALFI) form a helical membrane-spanning segment. Topologically, residues 450-506 (PEYSKASGVQKHSNSSSGSLTNTPERGSDEDIEPLLQDSSIWELSSFEEPGNQCTEL) are extracellular. The disordered stretch occupies residues 457-481 (GVQKHSNSSSGSLTNTPERGSDEDI). Over residues 459–474 (QKHSNSSSGSLTNTPE) the composition is skewed to polar residues. N-linked (GlcNAc...) asparagine glycosylation is present at Asn463.

It belongs to the major facilitator superfamily.

It localises to the membrane. This is Hippocampus abundant transcript-like protein 1 from Homo sapiens (Human).